The primary structure comprises 412 residues: MSYIQNQDKAVYEAIQNEYNRQNNNIELIASENFVSEAVMEAQGSVMTNKYAEGYPGRRYYGGCDYVDVTETIAIERAKALFGAEHVNVQPHSGSQANMAVYLVALEMGDTVLGMNLSHGGHLTHGSPVNFSGKFYNFVDYGVDKETEKIDYEVVRQLAHEHKPKLIVAGTSAYSRQLDFKKFKEIADEVGAKLMVDMAHIAGLVAAGLHPNPVEHADFVTTTTHKTLRGPRGGLILCKEEYKKDIDKTIFPGIQGGPLEHVIAAKAVAFGEALEQDFKVYQEQVIKNAKVLSQTLQEEGFRIVSGGTDNHLLSVDVKNSVNVTGKEAEATLDSIGITCNKNTIPFDQEKAFVTSGIRLGTPTATTRGFDEEAFKEVGRIISLALKNPNNDTKLKEARERVSRLTAKYPLYE.

(6S)-5,6,7,8-tetrahydrofolate is bound by residues Leu117 and 121 to 123; that span reads GHL. Lys226 is modified (N6-(pyridoxal phosphate)lysine).

The protein belongs to the SHMT family. In terms of assembly, homodimer. It depends on pyridoxal 5'-phosphate as a cofactor.

The protein resides in the cytoplasm. The catalysed reaction is (6R)-5,10-methylene-5,6,7,8-tetrahydrofolate + glycine + H2O = (6S)-5,6,7,8-tetrahydrofolate + L-serine. The protein operates within one-carbon metabolism; tetrahydrofolate interconversion. Its pathway is amino-acid biosynthesis; glycine biosynthesis; glycine from L-serine: step 1/1. Functionally, catalyzes the reversible interconversion of serine and glycine with tetrahydrofolate (THF) serving as the one-carbon carrier. This reaction serves as the major source of one-carbon groups required for the biosynthesis of purines, thymidylate, methionine, and other important biomolecules. Also exhibits THF-independent aldolase activity toward beta-hydroxyamino acids, producing glycine and aldehydes, via a retro-aldol mechanism. This chain is Serine hydroxymethyltransferase, found in Staphylococcus haemolyticus (strain JCSC1435).